Reading from the N-terminus, the 228-residue chain is Apoptosis regulator R1 (228 aa).

Residues 1 to 21 (LNPKKKENNGVKNGDREKQHE) are compositionally biased toward basic and acidic residues. Residues 1–29 (LNPKKKENNGVKNGDREKQHETGNTIFRG) form a disordered region. The BH1 motif lies at 120–139 (SLFQGGVNWGRIVAFFVFGA). Residues 171 to 186 (DWIQSNGGWNGFLTLY) carry the BH2 motif. The helical transmembrane segment at 207-227 (TVLTGAVALGALMTVGALFAS) threads the bilayer.

It belongs to the Bcl-2 family.

The protein resides in the membrane. Its function is as follows. Could be the homolog of mammalian Bcl-W. In Xenopus laevis (African clawed frog), this protein is Apoptosis regulator R1.